The following is a 225-amino-acid chain: ATP-dependent dethiobiotin synthetase BioD (225 aa).

Position 12-17 (12-17 (GVGKTV)) interacts with ATP. A Mg(2+)-binding site is contributed by Thr16. The active site involves Lys37. A substrate-binding site is contributed by Thr41. ATP is bound by residues Asp49, 108 to 111 (EGAG), and 197 to 199 (PAG). Mg(2+) is bound by residues Asp49 and Glu108.

It belongs to the dethiobiotin synthetase family. In terms of assembly, homodimer. Mg(2+) is required as a cofactor.

The protein localises to the cytoplasm. It catalyses the reaction (7R,8S)-7,8-diammoniononanoate + CO2 + ATP = (4R,5S)-dethiobiotin + ADP + phosphate + 3 H(+). The protein operates within cofactor biosynthesis; biotin biosynthesis; biotin from 7,8-diaminononanoate: step 1/2. In terms of biological role, catalyzes a mechanistically unusual reaction, the ATP-dependent insertion of CO2 between the N7 and N8 nitrogen atoms of 7,8-diaminopelargonic acid (DAPA, also called 7,8-diammoniononanoate) to form a ureido ring. This Mycolicibacterium smegmatis (strain ATCC 700084 / mc(2)155) (Mycobacterium smegmatis) protein is ATP-dependent dethiobiotin synthetase BioD.